We begin with the raw amino-acid sequence, 216 residues long: Phosphatidylserine decarboxylase proenzyme (216 aa).

S185 functions as the Schiff-base intermediate with substrate; via pyruvic acid in the catalytic mechanism. The residue at position 185 (S185) is a Pyruvic acid (Ser); by autocatalysis.

The protein belongs to the phosphatidylserine decarboxylase family. PSD-A subfamily. Heterodimer of a large membrane-associated beta subunit and a small pyruvoyl-containing alpha subunit. Pyruvate is required as a cofactor. Post-translationally, is synthesized initially as an inactive proenzyme. Formation of the active enzyme involves a self-maturation process in which the active site pyruvoyl group is generated from an internal serine residue via an autocatalytic post-translational modification. Two non-identical subunits are generated from the proenzyme in this reaction, and the pyruvate is formed at the N-terminus of the alpha chain, which is derived from the carboxyl end of the proenzyme. The post-translation cleavage follows an unusual pathway, termed non-hydrolytic serinolysis, in which the side chain hydroxyl group of the serine supplies its oxygen atom to form the C-terminus of the beta chain, while the remainder of the serine residue undergoes an oxidative deamination to produce ammonia and the pyruvoyl prosthetic group on the alpha chain.

The protein resides in the cell membrane. It catalyses the reaction a 1,2-diacyl-sn-glycero-3-phospho-L-serine + H(+) = a 1,2-diacyl-sn-glycero-3-phosphoethanolamine + CO2. The protein operates within phospholipid metabolism; phosphatidylethanolamine biosynthesis; phosphatidylethanolamine from CDP-diacylglycerol: step 2/2. Functionally, catalyzes the formation of phosphatidylethanolamine (PtdEtn) from phosphatidylserine (PtdSer). This Nitrosomonas europaea (strain ATCC 19718 / CIP 103999 / KCTC 2705 / NBRC 14298) protein is Phosphatidylserine decarboxylase proenzyme.